We begin with the raw amino-acid sequence, 475 residues long: Ribulose bisphosphate carboxylase large chain (475 aa).

The substrate site is built by asparagine 123 and threonine 173. Lysine 175 acts as the Proton acceptor in catalysis. Lysine 177 serves as a coordination point for substrate. 3 residues coordinate Mg(2+): lysine 201, aspartate 203, and glutamate 204. The residue at position 201 (lysine 201) is an N6-carboxylysine. Residue histidine 294 is the Proton acceptor of the active site. Arginine 295, histidine 327, and serine 379 together coordinate substrate.

Belongs to the RuBisCO large chain family. Type I subfamily. Heterohexadecamer of 8 large chains and 8 small chains; disulfide-linked. The disulfide link is formed within the large subunit homodimers. Mg(2+) serves as cofactor. In terms of processing, the disulfide bond which can form in the large chain dimeric partners within the hexadecamer appears to be associated with oxidative stress and protein turnover.

It is found in the plastid. The protein localises to the chloroplast. It carries out the reaction 2 (2R)-3-phosphoglycerate + 2 H(+) = D-ribulose 1,5-bisphosphate + CO2 + H2O. It catalyses the reaction D-ribulose 1,5-bisphosphate + O2 = 2-phosphoglycolate + (2R)-3-phosphoglycerate + 2 H(+). Functionally, ruBisCO catalyzes two reactions: the carboxylation of D-ribulose 1,5-bisphosphate, the primary event in carbon dioxide fixation, as well as the oxidative fragmentation of the pentose substrate in the photorespiration process. Both reactions occur simultaneously and in competition at the same active site. The sequence is that of Ribulose bisphosphate carboxylase large chain from Euglena gracilis.